The following is a 465-amino-acid chain: Ras GTPase-activating protein-binding protein 1 (465 aa).

Positions 11–133 constitute an NTF2 domain; it reads VGREFVRQYY…FYVHNDIFRY (123 aa). Residues Lys36, Lys50, Lys59, Lys64, Lys76, and Lys123 each participate in a glycyl lysine isopeptide (Lys-Gly) (interchain with G-Cter in ubiquitin) cross-link. The tract at residues 142–224 is acidic disordered region; it reads ITEPQEESEE…EPVLEETAPE (83 aa). The residue at position 143 (Thr143) is a Phosphothreonine. Acidic residues-rich tracts occupy residues 145-157 and 184-205; these read PQEE…EEPE and EHLE…EQEP. Positions 145 to 242 are disordered; sequence PQEESEEEVE…APADIAQTVQ (98 aa). Ser149 bears the Phosphoserine mark. Phosphoserine is present on residues Ser230, Ser231, Ser249, and Ser252. A disordered region spans residues 254–326; the sequence is TSKNLPPSGA…PVREAGEQGD (73 aa). Basic and acidic residues-rich tracts occupy residues 296–306 and 317–326; these read PQRDQRVREQR and PVREAGEQGD. The RRM domain maps to 339–414; it reads HQLFIGNLPH…VRLNVEEKKT (76 aa). Residues Lys352 and Lys356 each participate in a glycyl lysine isopeptide (Lys-Gly) (interchain with G-Cter in ubiquitin) cross-link. Ser372 is modified (phosphoserine). Residue Lys375 forms a Glycyl lysine isopeptide (Lys-Gly) (interchain with G-Cter in ubiquitin) linkage. An N6-acetyllysine; alternate modification is found at Lys375. Residue Lys375 forms a Glycyl lysine isopeptide (Lys-Gly) (interchain with G-Cter in SUMO2); alternate linkage. Lys392 is covalently cross-linked (Glycyl lysine isopeptide (Lys-Gly) (interchain with G-Cter in ubiquitin); alternate). The tract at residues 409-465 is RG-rich region; it reads VEEKKTRAAREGDRRDNRLRGPGGPRGGLGGGMRGPPRGGMVQKPGFGVGRSIAPRQ. Positions 412–427 are enriched in basic and acidic residues; it reads KKTRAAREGDRRDNRL. Positions 412 to 465 are disordered; sequence KKTRAAREGDRRDNRLRGPGGPRGGLGGGMRGPPRGGMVQKPGFGVGRSIAPRQ. Arg428 bears the Asymmetric dimethylarginine mark. Gly residues predominate over residues 429 to 446; sequence GPGGPRGGLGGGMRGPPR. Asymmetric dimethylarginine; alternate is present on Arg434. Omega-N-methylarginine; alternate is present on residues Arg434, Arg446, Arg459, and Arg464. A Dimethylated arginine; alternate modification is found at Arg459.

As to quaternary structure, homodimer and oligomer. Component of a TAU mRNP complex, at least composed of IGF2BP1, ELAVL4 and G3BP1. Binds to the SH3 domain of Ras GTPase-activating protein (RASA1) in proliferating cells. No interaction in quiescent cells. Interacts (via NTF2 domain) with USP10; inhibiting stress granule formation by lowering G3BP1 valence. Interacts (via NTF2 domain) with CAPRIN1; promoting stress granule formation by lowering the saturation-concentration of G3BP1. Interacts (via NTF2 domain) with UBAP2L; promoting stress granule formation. Associates (via RG-rich region) with 40S ribosome subunits. Interacts with RPTOR and SPAG5; this complex is increased by oxidative stress. Interacts with ATXN2L. Interacts with STYXL1. Interacts with CGAS (via N-terminus); this interaction promotes the DNA-binding and activation of CGAS. Interacts (via C-terminus) with RIGI. Interacts with PABPC1. Interacts with QKI (isoforms QKI6 and QKI7); directing N(7)-methylguanine-containing mRNAs to stress granules. Mg(2+) serves as cofactor. Post-translationally, phosphorylation of the acidic disordered region regulates stress granule assembly. RASA1-dependent phosphorylation of Ser-149 induces a conformational change that prevents self-association. Dephosphorylation after HRAS activation is required for stress granule assembly. Ser-149 phosphorylation induces partial nuclear localization. In terms of processing, arg-435 is dimethylated, probably to asymmetric dimethylarginine. Ubiquitinated by TRIM21 via 'Lys-63'-linked polyubiquitination in the NTF2 domain in response to heat shock, leading to stress granule disassembly: ubiquitination promotes interaction with the FAF2 adapter, followed by interaction with VCP, which extracts G3BP1 from stress granules, leading to stress granule disassembly. In case of prolonged stress, ubiquitination by TRIM21 leads to autophagy-dependent degradation of G3BP1 via recruitment of ubiquitinated G3BP1 by SQSTM1 and/or CALCOCO2 to autophagosomes.

It localises to the cytoplasm. Its subcellular location is the cytosol. It is found in the perikaryon. The protein localises to the stress granule. The protein resides in the nucleus. It catalyses the reaction ATP + H2O = ADP + phosphate + H(+). With respect to regulation, under physiological conditions, G3BP1 adopts a compact state that is stabilized by intramolecular interactions between the RG-rich and the acidic regions that inhibit phase separation. Upon stress, polysomes disassemble and mRNAs are released in an unfolded protein-free state. Binding of unfolded mRNA to G3BP1 outcompetes the intramolecular interactions and RNA-bound G3BP1 adopts an expanded conformation in which the RG-rich region becomes exposed to engage in protein-protein and protein-RNA interactions, allowing physical cross-linking of RNA molecules to form protein-RNA condensates, leading to liquid-liquid phase separation (LLPS). Its function is as follows. Protein involved in various processes, such as stress granule formation and innate immunity. Plays an essential role in stress granule formation. Stress granules are membraneless compartments that store mRNAs and proteins, such as stalled translation pre-initiation complexes, in response to stress. Promotes formation of stress granules phase-separated membraneless compartment by undergoing liquid-liquid phase separation (LLPS) upon unfolded RNA-binding: functions as a molecular switch that triggers RNA-dependent LLPS in response to a rise in intracellular free RNA concentrations. Also acts as an ATP- and magnesium-dependent helicase: unwinds DNA/DNA, RNA/DNA, and RNA/RNA substrates with comparable efficiency. Acts unidirectionally by moving in the 5' to 3' direction along the bound single-stranded DNA. Unwinds preferentially partial DNA and RNA duplexes having a 17 bp annealed portion and either a hanging 3' tail or hanging tails at both 5'- and 3'-ends. Plays an essential role in innate immunity by promoting CGAS and RIGI activity. Participates in the DNA-triggered cGAS/STING pathway by promoting the DNA binding and activation of CGAS. Triggers the condensation of cGAS, a process probably linked to the formation of membrane-less organelles. Also enhances RIGI-induced type I interferon production probably by helping RIGI at sensing pathogenic RNA. May also act as a phosphorylation-dependent sequence-specific endoribonuclease in vitro: Cleaves exclusively between cytosine and adenine and cleaves MYC mRNA preferentially at the 3'-UTR. This is Ras GTPase-activating protein-binding protein 1 (G3BP1) from Bos taurus (Bovine).